The following is a 927-amino-acid chain: Translation initiation factor IF-2 (927 aa).

The segment at 27 to 338 (LGLPVKSHAS…APKPVTERKF (312 aa)) is disordered. A compositionally biased stretch (polar residues) spans 49–69 (SFSSSKTKAPTNSVQTNQGVK). Basic and acidic residues-rich tracts occupy residues 70–86 (TESKTVETKQGLSDDKP) and 101–138 (FKAEREARAKAEAEKRQHNGDHRKNNRHNDTRSDDRRH). The span at 146 to 159 (GNRNDNRQGQQNNR) shows a compositional bias: low complexity. Composition is skewed to basic and acidic residues over residues 160-171 (NKNDGRYADHKQ), 202-226 (YSRHSEQRFREEQEAKRQAAKEQEL), and 234-257 (AQEEAQKAKEKLASKPVAKVKEIV). The span at 300–316 (NWNNQNQVRNQRNSNWN) shows a compositional bias: low complexity. A tr-type G domain is found at 428–597 (ERPPVVTIMG…LLVAEMEELK (170 aa)). A G1 region spans residues 437-444 (GHVDHGKT). 437–444 (GHVDHGKT) contributes to the GTP binding site. Residues 462–466 (GITQH) are G2. The segment at 483–486 (DTPG) is G3. Residues 483-487 (DTPGH) and 537-540 (NKID) contribute to the GTP site. Positions 537 to 540 (NKID) are G4. Residues 573 to 575 (SAK) form a G5 region.

This sequence belongs to the TRAFAC class translation factor GTPase superfamily. Classic translation factor GTPase family. IF-2 subfamily.

It localises to the cytoplasm. Functionally, one of the essential components for the initiation of protein synthesis. Protects formylmethionyl-tRNA from spontaneous hydrolysis and promotes its binding to the 30S ribosomal subunits. Also involved in the hydrolysis of GTP during the formation of the 70S ribosomal complex. This chain is Translation initiation factor IF-2, found in Streptococcus agalactiae serotype Ia (strain ATCC 27591 / A909 / CDC SS700).